The chain runs to 553 residues: Hydroxylamine reductase (553 aa).

The [2Fe-2S] cluster site is built by cysteine 3, cysteine 6, cysteine 18, and cysteine 25. Residues histidine 252, glutamate 276, cysteine 320, cysteine 408, cysteine 436, cysteine 461, glutamate 495, and lysine 497 each contribute to the hybrid [4Fe-2O-2S] cluster site. A Cysteine persulfide modification is found at cysteine 408.

The protein belongs to the HCP family. [2Fe-2S] cluster is required as a cofactor. Requires hybrid [4Fe-2O-2S] cluster as cofactor.

The protein resides in the cytoplasm. The enzyme catalyses A + NH4(+) + H2O = hydroxylamine + AH2 + H(+). Functionally, catalyzes the reduction of hydroxylamine to form NH(3) and H(2)O. This is Hydroxylamine reductase from Aliivibrio fischeri (strain ATCC 700601 / ES114) (Vibrio fischeri).